The primary structure comprises 694 residues: Cyclic nucleotide-gated channel beta-3 (694 aa).

Over 1–210 (MLKSLTVKFN…SIDSYTDRVY (210 aa)) the chain is Cytoplasmic. Disordered stretches follow at residues 24 to 82 (CPNL…DPEC) and 146 to 177 (ENFP…KEHQ). 2 stretches are compositionally biased toward polar residues: residues 26 to 40 (NLSS…QGDN) and 153 to 168 (ASSQ…PKQE). A helical membrane pass occupies residues 211 to 234 (LLWLLLVTIAYNWNCWLLPVRLVF). The Extracellular portion of the chain corresponds to 235-241 (PCQTPDN). A helical membrane pass occupies residues 242–262 (KNYWIITDIVCDIIYLCDILL). At 263 to 291 (IQPRLQFVRGGEIIVDSNELKRNYRSSTK) the chain is on the cytoplasmic side. Residues 292–309 (FRMDVASLLPFEVLYIFF) traverse the membrane as a helical segment. The Extracellular portion of the chain corresponds to 310–312 (GVN). A helical transmembrane segment spans residues 313–327 (PIFRANRILKYTSFF). At 328-340 (EFNHHLESIMDKA) the chain is on the cytoplasmic side. Positions 340–439 (AYVYRVIRTT…IGQMRDVIGA (100 aa)) are ion conduction pathway. A helical membrane pass occupies residues 341–363 (YVYRVIRTTGYLLFLLHINACVY). The Extracellular portion of the chain corresponds to 364-385 (YWASDYEGIGSTKWVYNGEGNK). The next 2 helical transmembrane spans lie at 386-412 (YLRC…SFEI) and 413-437 (VFQF…RDVI). Residues 399 to 402 (TIGG) form a selectivity filter region. Residues 438–694 (GAATANQNYF…KGKRKTTTQK (257 aa)) are Cytoplasmic-facing. The interval 442-518 (ANQNYFQACM…SIIDKVELFK (77 aa)) is C-linker. A cyclic nucleotide-binding domain region spans residues 522–638 (TQMIYDLLLR…LLMKKAKILL (117 aa)). 3',5'-cyclic GMP-binding residues include Gly583, Glu584, Arg596, and Thr597.

The protein belongs to the cyclic nucleotide-gated cation channel (TC 1.A.1.5) family. CNGB3 subfamily. Forms heterotetrameric channels composed of CNGA3 and CNGB3 subunits with 3:1 stoichiometry. In terms of tissue distribution, small subset of retinal photoreceptor cells and testis.

The protein resides in the cell membrane. The catalysed reaction is Ca(2+)(in) = Ca(2+)(out). It carries out the reaction Na(+)(in) = Na(+)(out). It catalyses the reaction K(+)(in) = K(+)(out). The enzyme catalyses NH4(+)(in) = NH4(+)(out). The catalysed reaction is Rb(+)(in) = Rb(+)(out). It carries out the reaction Li(+)(in) = Li(+)(out). It catalyses the reaction Cs(+)(in) = Cs(+)(out). In terms of biological role, pore-forming subunit of the cone cyclic nucleotide-gated channel. Mediates cone photoresponses at bright light converting transient changes in intracellular cGMP levels into electrical signals. In the dark, cGMP levels are high and keep the channel open enabling a steady inward current carried by Na(+) and Ca(2+) ions that leads to membrane depolarization and neurotransmitter release from synaptic terminals. Upon photon absorption cGMP levels decline leading to channel closure and membrane hyperpolarization that ultimately slows neurotransmitter release and signals the presence of light, the end point of the phototransduction cascade. Conducts cGMP- and cAMP-gated ion currents, with permeability for monovalent and divalent cations. The protein is Cyclic nucleotide-gated channel beta-3 of Mus musculus (Mouse).